The chain runs to 394 residues: S-adenosylmethionine synthase 2 (394 aa).

Glu-11 contributes to the Mg(2+) binding site. His-17 serves as a coordination point for ATP. Glu-45 contributes to the K(+) binding site. L-methionine contacts are provided by Glu-58 and Gln-101. Residues 169–171 (DGK), 237–240 (SGRF), Asp-248, 254–255 (RK), Ala-271, Lys-275, and Lys-279 contribute to the ATP site. Residue Asp-248 coordinates L-methionine. An L-methionine-binding site is contributed by Lys-279.

The protein belongs to the AdoMet synthase family. Homotetramer. The cofactor is Mn(2+). Mg(2+) serves as cofactor. Requires Co(2+) as cofactor. It depends on K(+) as a cofactor.

Its subcellular location is the cytoplasm. The enzyme catalyses L-methionine + ATP + H2O = S-adenosyl-L-methionine + phosphate + diphosphate. It participates in amino-acid biosynthesis; S-adenosyl-L-methionine biosynthesis; S-adenosyl-L-methionine from L-methionine: step 1/1. Catalyzes the formation of S-adenosylmethionine from methionine and ATP. The reaction comprises two steps that are both catalyzed by the same enzyme: formation of S-adenosylmethionine (AdoMet) and triphosphate, and subsequent hydrolysis of the triphosphate. In Oryza sativa subsp. japonica (Rice), this protein is S-adenosylmethionine synthase 2 (SAM2).